A 516-amino-acid chain; its full sequence is Maintenance of mitochondrial morphology protein 1 (516 aa).

The Lumenal portion of the chain corresponds to M1 to G43. The helical transmembrane segment at L44–F64 threads the bilayer. Topologically, residues G65 to T516 are cytoplasmic. Disordered regions lie at residues P70–T118, T295–G349, R420–G466, and G485–T516. Composition is skewed to polar residues over residues G74–S96, S105–T118, and T295–E312. In terms of domain architecture, SMP-LTD spans Q151–P412. Gly residues predominate over residues G449 to M460.

It belongs to the MMM1 family. Homodimer. Component of the ER-mitochondria encounter structure (ERMES) or MDM complex, composed of MMM1, MDM10, MDM12 and MDM34. An MMM1 homodimer associates with one molecule of MDM12 on each side in a pairwise head-to-tail manner, and the SMP-LTD domains of MMM1 and MDM12 generate a continuous hydrophobic tunnel for phospholipid trafficking.

The protein localises to the endoplasmic reticulum membrane. Component of the ERMES/MDM complex, which serves as a molecular tether to connect the endoplasmic reticulum (ER) and mitochondria. Components of this complex are involved in the control of mitochondrial shape and protein biogenesis, and function in nonvesicular lipid trafficking between the ER and mitochondria. The MDM12-MMM1 subcomplex functions in the major beta-barrel assembly pathway that is responsible for biogenesis of all outer membrane beta-barrel proteins, and acts in a late step after the SAM complex. The MDM10-MDM12-MMM1 subcomplex further acts in the TOM40-specific pathway after the action of the MDM12-MMM1 complex. Essential for establishing and maintaining the structure of mitochondria and maintenance of mtDNA nucleoids. This Paracoccidioides brasiliensis (strain Pb18) protein is Maintenance of mitochondrial morphology protein 1.